The chain runs to 70 residues: MLKMGVVLFIFLVLFPLATLQLDADQPVERYAENKQLLSPDERREIILHALGTRCCSWDVCDHPSCTCCG.

The N-terminal stretch at 1 to 24 (MLKMGVVLFIFLVLFPLATLQLDA) is a signal peptide. The propeptide occupies 25-44 (DQPVERYAENKQLLSPDERR). Intrachain disulfides connect Cys-55–Cys-68, Cys-56–Cys-66, and Cys-61–Cys-69. Trp-58 is modified (6'-bromotryptophan; partial). Cysteine amide; partial is present on Cys-69.

This sequence belongs to the conotoxin M superfamily. Post-translationally, two short peptides are produced from this precursor; Conotoxin tx3a-b is amidated at Cys-69 (but has no bromotryptophan), whereas conotoxin tx3a-a has an unmodified Gly-70 and a bromotryptophan. Two elongated peptides are also produced; Conotoxin elongated-tx3a-b is amidated at Cys-69 (but has no bromotryptophan), whereas conotoxin elongated tx3a-a has an unmodified Gly-70 (but has no bromotryptophan). Ju et al. (2022) describe a disulfide connectivity (C55-C61; C56-C69; C66-C68) that differs from that of Han and colleagues (2006), McDougal et al. (2008), and Ueberheide et al. (2009). As to expression, expressed by the venom duct. Is present in all duct parts with a highest content in part 2 (proximal of the venom bulb) and then decreases in concentration toward the end of the duct.

The protein localises to the secreted. Functionally, intracranial injection into mice causes scratching and hyperactivity. In vitro, inhibits proliferation of the mice ovarian cancer cells ID8. The protein is Conotoxin elongated-tx3a-a of Conus textile (Cloth-of-gold cone).